The primary structure comprises 282 residues: Putative phosphoenolpyruvate synthase regulatory protein (282 aa).

161 to 168 (GVSRSGKT) provides a ligand contact to ADP.

This sequence belongs to the pyruvate, phosphate/water dikinase regulatory protein family. PSRP subfamily.

It carries out the reaction [pyruvate, water dikinase] + ADP = [pyruvate, water dikinase]-phosphate + AMP + H(+). It catalyses the reaction [pyruvate, water dikinase]-phosphate + phosphate + H(+) = [pyruvate, water dikinase] + diphosphate. Functionally, bifunctional serine/threonine kinase and phosphorylase involved in the regulation of the phosphoenolpyruvate synthase (PEPS) by catalyzing its phosphorylation/dephosphorylation. The protein is Putative phosphoenolpyruvate synthase regulatory protein of Janthinobacterium sp. (strain Marseille) (Minibacterium massiliensis).